The primary structure comprises 340 residues: Uroporphyrinogen decarboxylase (340 aa).

Substrate contacts are provided by residues 21-25 (RQAGR), Asp71, Tyr148, Ser203, and His316.

The protein belongs to the uroporphyrinogen decarboxylase family. Homodimer.

It is found in the cytoplasm. It carries out the reaction uroporphyrinogen III + 4 H(+) = coproporphyrinogen III + 4 CO2. The protein operates within porphyrin-containing compound metabolism; protoporphyrin-IX biosynthesis; coproporphyrinogen-III from 5-aminolevulinate: step 4/4. In terms of biological role, catalyzes the decarboxylation of four acetate groups of uroporphyrinogen-III to yield coproporphyrinogen-III. The polypeptide is Uroporphyrinogen decarboxylase (Campylobacter jejuni subsp. jejuni serotype O:23/36 (strain 81-176)).